The primary structure comprises 294 residues: Ribosomal protein L11 methyltransferase (294 aa).

S-adenosyl-L-methionine contacts are provided by Thr146, Gly167, Asp189, and Asn231.

This sequence belongs to the methyltransferase superfamily. PrmA family.

The protein localises to the cytoplasm. The enzyme catalyses L-lysyl-[protein] + 3 S-adenosyl-L-methionine = N(6),N(6),N(6)-trimethyl-L-lysyl-[protein] + 3 S-adenosyl-L-homocysteine + 3 H(+). In terms of biological role, methylates ribosomal protein L11. The sequence is that of Ribosomal protein L11 methyltransferase from Photobacterium profundum (strain SS9).